The following is a 468-amino-acid chain: UDP-N-acetylmuramoyl-L-alanine--L-glutamate ligase (468 aa).

Residue 122 to 128 (GTKGKST) coordinates ATP.

The protein belongs to the MurCDEF family. MurD2 subfamily.

The protein resides in the cytoplasm. The enzyme catalyses UDP-N-acetyl-alpha-D-muramoyl-L-alanine + L-glutamate + ATP = UDP-N-acetyl-alpha-D-muramoyl-L-alanyl-L-glutamate + ADP + phosphate + H(+). It participates in cell wall biogenesis; peptidoglycan biosynthesis. Functionally, cell wall formation. Catalyzes the addition of L-glutamate to the nucleotide precursor UDP-N-acetylmuramoyl-L-alanine. This is UDP-N-acetylmuramoyl-L-alanine--L-glutamate ligase from Xanthomonas campestris pv. campestris (strain 8004).